The following is an 84-amino-acid chain: ATP synthase subunit c (84 aa).

The next 2 helical transmembrane spans lie at 9–29 (IFGS…GFSL) and 54–74 (IVAG…LLFI).

It belongs to the ATPase C chain family. F-type ATPases have 2 components, F(1) - the catalytic core - and F(0) - the membrane proton channel. F(1) has five subunits: alpha(3), beta(3), gamma(1), delta(1), epsilon(1). F(0) has three main subunits: a(1), b(2) and c(10-14). The alpha and beta chains form an alternating ring which encloses part of the gamma chain. F(1) is attached to F(0) by a central stalk formed by the gamma and epsilon chains, while a peripheral stalk is formed by the delta and b chains.

Its subcellular location is the cell inner membrane. In terms of biological role, f(1)F(0) ATP synthase produces ATP from ADP in the presence of a proton or sodium gradient. F-type ATPases consist of two structural domains, F(1) containing the extramembraneous catalytic core and F(0) containing the membrane proton channel, linked together by a central stalk and a peripheral stalk. During catalysis, ATP synthesis in the catalytic domain of F(1) is coupled via a rotary mechanism of the central stalk subunits to proton translocation. Key component of the F(0) channel; it plays a direct role in translocation across the membrane. A homomeric c-ring of between 10-14 subunits forms the central stalk rotor element with the F(1) delta and epsilon subunits. This is ATP synthase subunit c from Histophilus somni (strain 2336) (Haemophilus somnus).